We begin with the raw amino-acid sequence, 336 residues long: Fructose-1,6-bisphosphatase class 1 (336 aa).

Mg(2+)-binding residues include Glu-90, Asp-112, Leu-114, and Asp-115. Substrate is bound by residues 115 to 118 (DGSS), Asn-211, and Lys-277. Glu-283 is a Mg(2+) binding site.

It belongs to the FBPase class 1 family. Homotetramer. Mg(2+) serves as cofactor.

It localises to the cytoplasm. It carries out the reaction beta-D-fructose 1,6-bisphosphate + H2O = beta-D-fructose 6-phosphate + phosphate. It participates in carbohydrate biosynthesis; gluconeogenesis. This is Fructose-1,6-bisphosphatase class 1 from Pseudomonas syringae pv. syringae (strain B728a).